The chain runs to 443 residues: Glucose-6-phosphate isomerase (443 aa).

The active-site Proton donor is the E285. Catalysis depends on residues H306 and K420.

Belongs to the GPI family.

It is found in the cytoplasm. The enzyme catalyses alpha-D-glucose 6-phosphate = beta-D-fructose 6-phosphate. The protein operates within carbohydrate biosynthesis; gluconeogenesis. It functions in the pathway carbohydrate degradation; glycolysis; D-glyceraldehyde 3-phosphate and glycerone phosphate from D-glucose: step 2/4. In terms of biological role, catalyzes the reversible isomerization of glucose-6-phosphate to fructose-6-phosphate. The polypeptide is Glucose-6-phosphate isomerase (Staphylococcus aureus (strain USA300)).